Here is a 432-residue protein sequence, read N- to C-terminus: Amino acid transporter ANT1 (432 aa).

The segment at 1 to 30 (MAIKDLTATTGDSSLPLIKSPPSETTGGDR) is disordered. Over 1–35 (MAIKDLTATTGDSSLPLIKSPPSETTGGDRTSALQ) the chain is Cytoplasmic. The chain crosses the membrane as a helical span at residues 36–56 (TLGNIIVSIVGTGVLGLPYAF). The Lumenal segment spans residues 57–62 (RIAGWL). A helical membrane pass occupies residues 63-83 (AGSLGVIIVGFATYYCMLLLI). Residues 84 to 115 (QCRDKLESEEGEEESKTYGDLGFKCMGTKGRY) are Cytoplasmic-facing. A helical transmembrane segment spans residues 116–136 (LTEFLIFTAQCGGSVAYLVFI). At 137-147 (GRNLSSIFSSY) the chain is on the lumenal side. The helical transmembrane segment at 148-168 (GLSMVSFILILVPIEVGLSWI) threads the bilayer. Topologically, residues 169 to 172 (TSLS) are cytoplasmic. The helical transmembrane segment at 173–193 (ALSPFSIFADICNIIAMCFVV) threads the bilayer. The Lumenal portion of the chain corresponds to 194–219 (KENVEMVIEGDFSFSDRTAISSTIGG). Residues 220-240 (LPFAGGVAVFCFEGFAMTLAL) form a helical membrane-spanning segment. At 241-256 (ESSMREREAFPKLLAK) the chain is on the cytoplasmic side. The helical transmembrane segment at 257 to 277 (VLAGITFVYVLFGFCGYMAYG) threads the bilayer. Topologically, residues 278-292 (DQTKDIITLNLPNNW) are lumenal. A helical transmembrane segment spans residues 293 to 313 (SAIAVQIGLCVGLTFTFPIMV). Over 314–353 (HPLNEIIEQKLKRIDWLQKHHNGYSNETGSVSKFAIFTTR) the chain is Cytoplasmic. A helical membrane pass occupies residues 354–374 (TLLVVGLAAIASLVPGFGTFA). Over 375–379 (SLVGS) the chain is Lumenal. Residues 380–400 (TLCALISFVLPASYHLTLLGP) traverse the membrane as a helical segment. Topologically, residues 401–410 (SLNVWNKSID) are cytoplasmic. Residues 411–431 (VFIVICGLIFAVYGTYNTIVG) form a helical membrane-spanning segment. A topological domain (lumenal) is located at residue Val432.

Belongs to the amino acid/polyamine transporter 2 family. Amino acid/auxin permease (AAAP) (TC 2.A.18.8) subfamily. As to expression, ubiquitous. Highly expressed in flowers and cauline leaves and at lower levels in stems, leaves and roots.

Its subcellular location is the endoplasmic reticulum membrane. Translocates aromatic and neutral amino acids such as tyrosine, tryptophan, phenylalanine, histidine, proline, leucine, valine, glutamine, as well as arginine. Transports the auxins indole-3-acetic acid (IAA) and 2,4-dichlorophenoxyacetic acid (2,4-D). The protein is Amino acid transporter ANT1 of Arabidopsis thaliana (Mouse-ear cress).